The following is a 488-amino-acid chain: 1-hydroxycarotenoid 3,4-desaturase (488 aa).

FAD contacts are provided by residues Glu-31, Lys-39, 55–56 (SL), Val-247, Asn-275, Leu-431, Gly-461, and 468–469 (GI).

The protein belongs to the carotenoid/retinoid oxidoreductase family. Monomer.

The enzyme catalyses rhodopin + A = (3E)-3,4-didehydrorhodopin + AH2. The catalysed reaction is 1'-hydroxy-gamma-carotene + A = 1'-hydroxytorulene + AH2. It catalyses the reaction 1-hydroxy-all-trans-1,2-dihydro-neurosporene + A = demethylspheroidene + AH2. It carries out the reaction 1,1'-dihydroxy-1,1',2,2'-tetrahydroneurosporene + A = 1'-hydroxy-demethylspheroidene + AH2. The enzyme catalyses 1,1'-dihydroxy-1,1',2,2'-tetrahydrolycopene + A = 1,1'-dihydroxy-3,4-didehydro-1,2-dihydrolycopene + AH2. It functions in the pathway carotenoid biosynthesis. Catalyzes the introduction of a C-3,4 double bond into 1'-hydroxy-gamma-carotene and rhodopin (1-hydroxylycopene) to yield 1'-hydroxytorulene and (3E)-3,4-didehydrorhodopin, respectively. Can also 1-hydroxy-all-trans-1,2-dihydro-neurosporene, 1,1'-dihydroxy-1,1',2,2'-tetrahydroneurosporene and 1,1'-dihydroxy-1,1',2,2'-tetrahydrolycopene. Probably involved in the synthesis of myxol, a gamma-carotene derivative. May use FAD as a proton acceptor. The protein is 1-hydroxycarotenoid 3,4-desaturase of Flavobacterium sp. (strain P99-3).